Here is a 250-residue protein sequence, read N- to C-terminus: 5'-nucleotidase SurE (250 aa).

Residues aspartate 8, aspartate 9, serine 39, and asparagine 95 each coordinate a divalent metal cation.

It belongs to the SurE nucleotidase family. The cofactor is a divalent metal cation.

It is found in the cytoplasm. The catalysed reaction is a ribonucleoside 5'-phosphate + H2O = a ribonucleoside + phosphate. Nucleotidase that shows phosphatase activity on nucleoside 5'-monophosphates. In Cupriavidus necator (strain ATCC 17699 / DSM 428 / KCTC 22496 / NCIMB 10442 / H16 / Stanier 337) (Ralstonia eutropha), this protein is 5'-nucleotidase SurE.